The following is a 186-amino-acid chain: Ribosome-recycling factor (186 aa).

Belongs to the RRF family.

Its subcellular location is the cytoplasm. Its function is as follows. Responsible for the release of ribosomes from messenger RNA at the termination of protein biosynthesis. May increase the efficiency of translation by recycling ribosomes from one round of translation to another. The polypeptide is Ribosome-recycling factor (Cupriavidus necator (strain ATCC 17699 / DSM 428 / KCTC 22496 / NCIMB 10442 / H16 / Stanier 337) (Ralstonia eutropha)).